The sequence spans 649 residues: Glycerol-3-phosphate dehydrogenase, mitochondrial (649 aa).

69 to 97 (DVLIIGGGATGTGVAVDASTRGLNVCLLE) contacts FAD.

It belongs to the FAD-dependent glycerol-3-phosphate dehydrogenase family. FAD is required as a cofactor.

It is found in the mitochondrion. The catalysed reaction is a quinone + sn-glycerol 3-phosphate = dihydroxyacetone phosphate + a quinol. It functions in the pathway polyol metabolism; glycerol degradation via glycerol kinase pathway; glycerone phosphate from sn-glycerol 3-phosphate (anaerobic route): step 1/1. This is Glycerol-3-phosphate dehydrogenase, mitochondrial (gut2) from Schizosaccharomyces pombe (strain 972 / ATCC 24843) (Fission yeast).